The following is a 434-amino-acid chain: E3 ubiquitin-protein ligase siah-1 (434 aa).

The segment at 27–88 (FEEDENAGPE…NGNTPSVTIP (62 aa)) is disordered. Over residues 43 to 55 (SSSSASSQRSSAS) the composition is skewed to low complexity. The segment covering 74 to 88 (MSNNQNGNTPSVTIP) has biased composition (polar residues). An RING-type; degenerate zinc finger spans residues 171–206 (CPVCLEYMLPPYMQCPSGHLVCSNCRPKLQCCPTCR). The SBD stretch occupies residues 220–415 (IANTVRFPCK…LGINVTISRI (196 aa)). The SIAH-type; degenerate zinc-finger motif lies at 223-283 (TVRFPCKFSN…VMDHLKKVHK (61 aa)). Residues C228, C235, H247, C251, C258, C265, H277, and H282 each coordinate Zn(2+).

Belongs to the SINA (Seven in absentia) family. As to quaternary structure, interacts with tir-1.

It carries out the reaction S-ubiquitinyl-[E2 ubiquitin-conjugating enzyme]-L-cysteine + [acceptor protein]-L-lysine = [E2 ubiquitin-conjugating enzyme]-L-cysteine + N(6)-ubiquitinyl-[acceptor protein]-L-lysine.. The protein operates within protein modification; protein ubiquitination. In terms of biological role, E3 ubiquitin-protein ligase that mediates ubiquitination and subsequent proteasomal degradation of target proteins. E3 ubiquitin ligases accept ubiquitin from an E2 ubiquitin-conjugating enzyme in the form of a thioester and then directly transfers the ubiquitin to targeted substrates. It probably triggers the ubiquitin-mediated degradation of different substrates. In Caenorhabditis briggsae, this protein is E3 ubiquitin-protein ligase siah-1.